The chain runs to 347 residues: GMP reductase (347 aa).

108-131 (ADFEKTVQILALNPALNFVCIDVA) serves as a coordination point for NADP(+). Glycine 181 and glycine 183 together coordinate K(+). Catalysis depends on cysteine 186, which acts as the Thioimidate intermediate. 216–239 (IVSDGGCTMPGDVAKAFGGGADFV) lines the NADP(+) pocket.

It belongs to the IMPDH/GMPR family. GuaC type 1 subfamily. As to quaternary structure, homotetramer.

The enzyme catalyses IMP + NH4(+) + NADP(+) = GMP + NADPH + 2 H(+). Functionally, catalyzes the irreversible NADPH-dependent deamination of GMP to IMP. It functions in the conversion of nucleobase, nucleoside and nucleotide derivatives of G to A nucleotides, and in maintaining the intracellular balance of A and G nucleotides. In Salmonella typhi, this protein is GMP reductase.